The following is a 337-amino-acid chain: Protein SphX (337 aa).

An N-terminal signal peptide occupies residues 1 to 30 (MTTLKPALRRAAVLLPIAAVASSLFPIQEA).

The protein belongs to the PstS family. Post-translationally, the N-terminus is blocked.

It is found in the cell inner membrane. May be involved in the system for phosphate transport across the cytoplasmic membrane. This chain is Protein SphX (sphX), found in Synechococcus elongatus (strain ATCC 33912 / PCC 7942 / FACHB-805) (Anacystis nidulans R2).